The sequence spans 327 residues: Gonadotropin-releasing hormone receptor (327 aa).

Topologically, residues Met-1–Arg-38 are extracellular. N-linked (GlcNAc...) asparagine glycans are attached at residues Asn-4 and Asn-18. Residues Val-39–Leu-58 traverse the membrane as a helical segment. Residues Lys-59–Lys-77 lie on the Cytoplasmic side of the membrane. A helical transmembrane segment spans residues Val-78–Leu-97. Topologically, residues Asp-98–Lys-115 are extracellular. Residue Asn-102 is glycosylated (N-linked (GlcNAc...) asparagine). An intrachain disulfide couples Cys-114 to Cys-195. The helical transmembrane segment at Val-116–Leu-137 threads the bilayer. At Asp-138–Trp-164 the chain is on the cytoplasmic side. A helical transmembrane segment spans residues Ile-165 to Ala-184. Topologically, residues Asp-185–Asn-211 are extracellular. Residues Phe-212–Ala-231 form a helical membrane-spanning segment. Residues Lys-232–Thr-280 are Cytoplasmic-facing. A helical membrane pass occupies residues Pro-281–Val-299. Over Ser-300 to His-305 the chain is Extracellular. Residues Phe-306–Phe-325 form a helical membrane-spanning segment. Topologically, residues Ser-326–Leu-327 are cytoplasmic.

Belongs to the G-protein coupled receptor 1 family. Pituitary gland.

It is found in the cell membrane. Its function is as follows. Receptor for gonadotropin releasing hormone (GnRH) that mediates the action of GnRH to stimulate the secretion of the gonadotropic hormones luteinizing hormone (LH) and follicle-stimulating hormone (FSH). This receptor mediates its action by association with G-proteins that activate a phosphatidylinositol-calcium second messenger system. The protein is Gonadotropin-releasing hormone receptor (Gnrhr) of Mus musculus (Mouse).